The chain runs to 1457 residues: MKEVVVDVAPKCIKGIEFGALSAKDIIAQSEVEVHTRDLYDLEKGRIPKDGGALDTKMGISSNANECATCHGNLASCHGHFGHIKLALPVFHVGYFKATIQVLQCICKNCSAVLLDEQTKRSFLNDLRRPHIDNLRRMKILKKLLEQCKKQRRCLNCNHVNGVVKKAASGAGPAALKIVHDTFRWIGKKATPEKDLWDKEFDEVFSRNPELEKFVKRIHDDLNPLKVLNLFKQISPSDCELLGIDSARGGRPEMYIWRYLPAPPVCIRPSVMMDAQSNEDDLTIKLTEIVWTSSLIKAGIEKGISINNLMEQWDYLQLSVAMYINSDSANPALLPSSGGGSKSSKPIRGFCQRLKGKQGRFRGNLSGKRVDFSGRTVISPDPNLKIDEVAVPDRVAKVLTYPEKCTRYNRKKLQKLILSGPNVHPGANYLLKQNESAKRNLRFGDRVKLAKNLHIGDVVERHIEDGDIVLFNRQPSLHRLSILSHYAKIRPWRTFRLNECVCTPYNADFDGDEMNIHVPQTEEARAEAINLMGVKNNLLTPKSGEPIIAATQDFITGSYLVSHKDSFFDRASLVQLLCMMSDADIQFDIPPPAIFKPVMLWTGKQVFSLLIKPNKKSNVVINLDAKNKTYTPPAKGFPNEMSPNDGFVIIRGSQILSGVMDKSTLGDGKKHSVFYTILRDYGPDEAANAMNRMAKLCARYLGNRGFSIGINDVIPGSDLKQKKELMVEQAYLKCDELIDLYNRGNLETQPGCNEEQTLEAKIGGLLSKVREEVGEICINELDSANAPLIMATCGSKGSTLNVSQMVAVVGQQIISGNRVPDGFQDRSLPHFTKNSKTPQSKGFVRNSFFSGLTPPEFLFHSISGREGLVDTAVKTAETGYMSRRLMKSLDDLSAQYDHTVRNSSNGIVQFTYGGDGLDPFDMEGDARPVNFVRQWDHAYNITFDIEDKGLLPYQIIELVDSILHPLEDRLVRYDNVGKIIPLEDSDKIEYIDQNDAEREFYQSIREFTTNKATKLAEIREKKMLKPFLTEPAEDFIRLDESDESLVAINQLSKVSANSINKFLEQCIYKYSRAKVEPGTAVGAIGAQSIGEPGTQMTLKTFHFAGVASMNVTLGVPRIKEIINASKVISTPIINSVLVNDDDEIAARVVKGRVEKTLLEDVAYFIEDVYKNNMAYLSIKIDLNTIEKLQLELNIESIAHSIANAPKLKILAGDVSVTGKDRINVLVTLREPKSINLMKNASADYKGTDASIVNSLFFRMQHLKRALPRICIKGLPDISRAVINIRDDGKKELLVEGYGLKEVMSTDGVVGTKTSTNHILEVFQVLGIEAARASIIGEIDYTMSKHGMSVDPRHIQLLGDVMTYKGEVLGITRFGLSKMRDSVLQLASFEKTTDHLFDASFYMKNDKIEGVSECIILGQTMNIGTGAFKLVNSFDVDKKALEMKPTLFEGMCEVSATA.

The Zn(2+) site is built by Cys-67, Cys-70, Cys-77, His-80, Cys-107, Cys-110, and Cys-154. Mg(2+) is bound by residues Asp-508, Asp-510, and Asp-512. Residues 854 to 866 form a bridging helix region; sequence PPEFLFHSISGRE.

Belongs to the RNA polymerase beta' chain family. In terms of assembly, component of the RNA polymerase III (Pol III) complex consisting of 17 subunits.

The protein localises to the nucleus. The enzyme catalyses RNA(n) + a ribonucleoside 5'-triphosphate = RNA(n+1) + diphosphate. Its function is as follows. DNA-dependent RNA polymerase catalyzes the transcription of DNA into RNA using the four ribonucleoside triphosphates as substrates. Largest and catalytic core component of RNA polymerase III which synthesizes small RNAs, such as 5S rRNA and tRNAs. Forms the polymerase active center together with the second largest subunit. A single-stranded DNA template strand of the promoter is positioned within the central active site cleft of Pol III. A bridging helix emanates from RPC1 and crosses the cleft near the catalytic site and is thought to promote translocation of Pol III by acting as a ratchet that moves the RNA-DNA hybrid through the active site by switching from straight to bent conformations at each step of nucleotide addition. The sequence is that of DNA-directed RNA polymerase III subunit RPC1 (RPC1) from Debaryomyces hansenii (strain ATCC 36239 / CBS 767 / BCRC 21394 / JCM 1990 / NBRC 0083 / IGC 2968) (Yeast).